Reading from the N-terminus, the 172-residue chain is Acetolactate synthase small subunit (172 aa).

One can recognise an ACT domain in the interval 4–79; the sequence is IITLTVVNRS…DVLKVTDITN (76 aa).

Belongs to the acetolactate synthase small subunit family. In terms of assembly, dimer of large and small chains.

The enzyme catalyses 2 pyruvate + H(+) = (2S)-2-acetolactate + CO2. Its pathway is amino-acid biosynthesis; L-isoleucine biosynthesis; L-isoleucine from 2-oxobutanoate: step 1/4. The protein operates within amino-acid biosynthesis; L-valine biosynthesis; L-valine from pyruvate: step 1/4. The sequence is that of Acetolactate synthase small subunit (ilvH) from Bacillus subtilis (strain 168).